Reading from the N-terminus, the 90-residue chain is Accessory gland-specific peptide 26Ab (90 aa).

An N-terminal signal peptide occupies residues 1–21 (MNYFAVICIFSCICLWQFSDA).

As to expression, main cells and secondary cells of the accessory glands of 1 day old virgin males (at protein level). In 5 day old virgin males, only detected in the secondary cells (at protein level). Reappears in the main cells after mating (at protein level). First detected in adult males 3-4 hr after eclosion, levels increase reaching a peak at day 3-5 which is maintained until at least day 10 of adulthood (at protein level). In unmated male adults, levels are maintained for the first 6 days of adulthood and then gradually decrease for at least the next 8 days. No expression in females.

It localises to the secreted. Its subcellular location is the extracellular space. The protein localises to the cytoplasm. Its function is as follows. This protein is transferred from male to female during mating and may affect egglaying and behavior after mating. The protein is Accessory gland-specific peptide 26Ab of Drosophila melanogaster (Fruit fly).